The following is a 129-amino-acid chain: Large ribosomal subunit protein bL20 (129 aa).

This sequence belongs to the bacterial ribosomal protein bL20 family.

Binds directly to 23S ribosomal RNA and is necessary for the in vitro assembly process of the 50S ribosomal subunit. It is not involved in the protein synthesizing functions of that subunit. The protein is Large ribosomal subunit protein bL20 of Mycolicibacterium gilvum (strain PYR-GCK) (Mycobacterium gilvum (strain PYR-GCK)).